A 174-amino-acid polypeptide reads, in one-letter code: Protein GrpE (174 aa).

It belongs to the GrpE family. As to quaternary structure, homodimer.

The protein resides in the cytoplasm. Participates actively in the response to hyperosmotic and heat shock by preventing the aggregation of stress-denatured proteins, in association with DnaK and GrpE. It is the nucleotide exchange factor for DnaK and may function as a thermosensor. Unfolded proteins bind initially to DnaJ; upon interaction with the DnaJ-bound protein, DnaK hydrolyzes its bound ATP, resulting in the formation of a stable complex. GrpE releases ADP from DnaK; ATP binding to DnaK triggers the release of the substrate protein, thus completing the reaction cycle. Several rounds of ATP-dependent interactions between DnaJ, DnaK and GrpE are required for fully efficient folding. The chain is Protein GrpE from Methanothermobacter thermautotrophicus (strain ATCC 29096 / DSM 1053 / JCM 10044 / NBRC 100330 / Delta H) (Methanobacterium thermoautotrophicum).